The following is a 559-amino-acid chain: MSESASMLQGSKRGTDSSVDVGGAKRTKVDMDDGSSSNNDEKELLEATKADELDEVVDDYAEQNDHSAQEVAGEYVPKKPEQPIMLTKDSNSGKYVFPPISKEDSLNARYFLKYHGSAQFLDSYLPEDLNSLYVFHLIKLLGFQLKDRELLTAVQKAVQNDVTSGVSSVVGTNPMVERVSPPQLSASTPSGDGYDDPLEKKHAVRLIKDLQKAMNKVLSTRIRLANFFTLDHFISKLKSAKKVLVLTGAGISTSLGIPDFRSSKGFYSQVTNLGLDDPQDVFNLDIFMENPSVFYTIAEKILPPEHKFSPLHSFIKMIQDKGKLLRNYTQNIDNLESYAGIFKENIVQCHGSFATASCVTCHLKMPGERIFQQIKDREIPLCAYCYPKRQEEYPTVSDDPGTKNGQQSSHNSSSIFHMSRSFGVIKPDITFFGEALPLEFHTNIRQDVLQCDLLICIGTSLKVAPVSEIVNMVPAHVPQVLINRDPVKHAEFDLTLLGLCDDVAAFIAQKCGWDIPHENWPQLKQRNIQYDELERGMYYVYDPVKEQAKDTGQRQVQAP.

The disordered stretch occupies residues 1–73 (MSESASMLQG…NDHSAQEVAG (73 aa)). Residues 39–51 (NDEKELLEATKAD) are compositionally biased toward basic and acidic residues. Residues 52-62 (ELDEVVDDYAE) are compositionally biased toward acidic residues. Residues 223–514 (RLANFFTLDH…AFIAQKCGWD (292 aa)) enclose the Deacetylase sirtuin-type domain. Residues 248–267 (GAGISTSLGIPDFRSSKGFY) and 330–333 (QNID) each bind NAD(+). His350 (proton acceptor) is an active-site residue. Zn(2+)-binding residues include Cys358, Cys361, Cys382, and Cys385. Residues 458–460 (GTS), 483–485 (NRD), and Cys500 contribute to the NAD(+) site.

This sequence belongs to the sirtuin family. Class I subfamily. Requires Zn(2+) as cofactor.

The protein localises to the nucleus. It carries out the reaction N(6)-acetyl-L-lysyl-[protein] + NAD(+) + H2O = 2''-O-acetyl-ADP-D-ribose + nicotinamide + L-lysyl-[protein]. Its function is as follows. NAD-dependent deacetylase. Heterochromatin component that silences transcription at silent mating loci, telomeres and the ribosomal DNA, and that also suppresses recombination in the rDNA and extends replicative life span. It acts as a NAD-dependent histone deacetylase, which deacetylates 'Lys-9' and 'Lys-14' of Histone H3 and 'Lys-16' of Histone H4. The polypeptide is NAD-dependent histone deacetylase SIR2 (SIR2) (Eremothecium gossypii (strain ATCC 10895 / CBS 109.51 / FGSC 9923 / NRRL Y-1056) (Yeast)).